Reading from the N-terminus, the 413-residue chain is MASSASDGTHERSAFRLSPPVLSGAMGPFMHTGLYVAQSWRDYLGQQPDKLPIARPTIALAAQAFRDEIVLLGLKARRPVSNHRVFERISQEVAAGLEFYGNRRWLEKPSGFFAQPPPLTEVAVRKVKDRRRSFYRIFFDSGFTPHPGEPGSQRWLSYTANNREYALLLRHPEPRPWLVCVHGTEMGRAPLDLAVFRAWKLHDELGLNIVMPVLPMHGPRGQGLPKGAVFPGEDVLDDVHGTAQAVWDIRRLLSWIRSQEEESLIGLNGLSLGGYIASLVASLEEGLACAILGVPVADLIELLGRHCGLRHKDPRRHTVKMAEPIGRMISPLSLTPLVPMPGRFIYAGIADRLVHPREQVTRLWEHWGKPEIVWYPGGHTGFFQSRPVRRFVQAALEQSGLLDAPRTQRDRSA.

This is an uncharacterized protein from Mycobacterium tuberculosis (strain ATCC 25618 / H37Rv).